The primary structure comprises 346 residues: Acetyl-coenzyme A carboxylase carboxyl transferase subunit beta (346 aa).

A CoA carboxyltransferase N-terminal domain is found at 24–292 (LWIKCPKSGD…LPEVEPIAVA (269 aa)). The span at 300 to 311 (AEAEAAPDEVVE) shows a compositional bias: acidic residues. Positions 300–346 (AEAEAAPDEVVEVEAPAVDEIVEEKPAATKAKPRSKAKSKAAPKTDE) are disordered. Positions 330-340 (AKPRSKAKSKA) are enriched in basic residues.

Belongs to the AccD/PCCB family. As to quaternary structure, acetyl-CoA carboxylase is a heterohexamer composed of biotin carboxyl carrier protein (AccB), biotin carboxylase (AccC) and two subunits each of ACCase subunit alpha (AccA) and ACCase subunit beta (AccD).

The protein resides in the cytoplasm. The catalysed reaction is N(6)-carboxybiotinyl-L-lysyl-[protein] + acetyl-CoA = N(6)-biotinyl-L-lysyl-[protein] + malonyl-CoA. Its pathway is lipid metabolism; malonyl-CoA biosynthesis; malonyl-CoA from acetyl-CoA: step 1/1. Functionally, component of the acetyl coenzyme A carboxylase (ACC) complex. Biotin carboxylase (BC) catalyzes the carboxylation of biotin on its carrier protein (BCCP) and then the CO(2) group is transferred by the transcarboxylase to acetyl-CoA to form malonyl-CoA. The protein is Acetyl-coenzyme A carboxylase carboxyl transferase subunit beta of Hirschia baltica (strain ATCC 49814 / DSM 5838 / IFAM 1418).